Here is an 84-residue protein sequence, read N- to C-terminus: Sec-independent protein translocase protein TatA (84 aa).

Residues 1-21 form a helical membrane-spanning segment; the sequence is MGGISIWQLLIIAVIVILLFG. The interval 40-84 is disordered; that stretch reads KKAMSDEDKPADKKDADFEPKNIEQQKTEASAETTAETKKDKEQA. 2 stretches are compositionally biased toward basic and acidic residues: residues 42–66 and 75–84; these read AMSD…EQQK and AETKKDKEQA.

It belongs to the TatA/E family. In terms of assembly, the Tat system comprises two distinct complexes: a TatABC complex, containing multiple copies of TatA, TatB and TatC subunits, and a separate TatA complex, containing only TatA subunits. Substrates initially bind to the TatABC complex, which probably triggers association of the separate TatA complex to form the active translocon.

The protein resides in the cell inner membrane. Its function is as follows. Part of the twin-arginine translocation (Tat) system that transports large folded proteins containing a characteristic twin-arginine motif in their signal peptide across membranes. TatA could form the protein-conducting channel of the Tat system. This Vibrio atlanticus (strain LGP32) (Vibrio splendidus (strain Mel32)) protein is Sec-independent protein translocase protein TatA.